The chain runs to 452 residues: GTPase Obg (452 aa).

The Obg domain occupies 1–158; that stretch reads MFIDRAKIYV…KWIVLELKVM (158 aa). Disordered regions lie at residues 66–87 and 117–143; these read GKRG…DKVI and AEGG…SEDG. Residues 159–338 form the OBG-type G domain; sequence AEVGLIGYPN…LLDFVAEKVA (180 aa). GTP contacts are provided by residues 165-172, 190-194, 212-215, 282-285, and 319-321; these read GYPNVGKS, FTTLN, DIPG, NKMD, and SAA. The Mg(2+) site is built by Ser-172 and Thr-192. The region spanning 376–452 is the OCT domain; that stretch reads IEEKPKSDFG…KIGNVEFEYQ (77 aa).

This sequence belongs to the TRAFAC class OBG-HflX-like GTPase superfamily. OBG GTPase family. Monomer. The cofactor is Mg(2+).

It localises to the cytoplasm. An essential GTPase which binds GTP, GDP and possibly (p)ppGpp with moderate affinity, with high nucleotide exchange rates and a fairly low GTP hydrolysis rate. Plays a role in control of the cell cycle, stress response, ribosome biogenesis and in those bacteria that undergo differentiation, in morphogenesis control. The sequence is that of GTPase Obg from Natranaerobius thermophilus (strain ATCC BAA-1301 / DSM 18059 / JW/NM-WN-LF).